The primary structure comprises 280 residues: UPF0276 protein NMB2142 (280 aa).

It belongs to the UPF0276 family.

This chain is UPF0276 protein NMB2142, found in Neisseria meningitidis serogroup B (strain ATCC BAA-335 / MC58).